Consider the following 1108-residue polypeptide: Serine/threonine-protein kinase AKL1 (1108 aa).

Ser2 is subject to N-acetylserine. Ser10 is subject to Phosphoserine. One can recognise a Protein kinase domain in the interval 35 to 319 (VEVVNYLAEG…IYQVLYHLCE (285 aa)). ATP contacts are provided by residues 41-49 (LAEGGFAQI) and Lys70. Asp181 functions as the Proton acceptor in the catalytic mechanism. Positions 405 to 466 (IPSQNVGQEL…QSPGIEDKSI (62 aa)) are disordered. At Ser407 the chain carries Phosphoserine. The segment covering 419 to 435 (ESQSDQRKSTLSEDKSS) has biased composition (basic and acidic residues). A compositionally biased stretch (low complexity) spans 436 to 449 (RTTSNANSSGTANN). Residue Thr471 is modified to Phosphothreonine. Positions 493-513 (KQSSDPTISEQSPRLNTQSLP) are enriched in polar residues. The tract at residues 493–534 (KQSSDPTISEQSPRLNTQSLPQRQKSTSSYSSGGRSMKSTSY) is disordered. Ser504 is modified (phosphoserine). Low complexity predominate over residues 514–534 (QRQKSTSSYSSGGRSMKSTSY). Residues Ser541 and Ser574 each carry the phosphoserine modification. Over residues 590 to 629 (QQQGQRYQQAQNQTGTQGNTFPDESQYQSRVEQQQQQQDQ) the composition is skewed to low complexity. 2 disordered regions span residues 590-663 (QQQG…GDSG) and 765-791 (EDMR…HSSS). Residues 781–791 (NSANEPMHSSS) show a composition bias toward polar residues. The residue at position 801 (Ser801) is a Phosphoserine. The tract at residues 807–838 (AGKQSFQDTNEPQTGGIEDAGGSGTIKGSNNN) is disordered. Over residues 810–819 (QSFQDTNEPQ) the composition is skewed to polar residues. Position 846 is a phosphoserine (Ser846). The interval 858–1108 (GAAVSSFSSS…SFFSVFRSEK (251 aa)) is disordered. A compositionally biased stretch (low complexity) spans 859-872 (AAVSSFSSSSSSAS). Positions 910–934 (DDARRGKTAERRPLHNERGHKDQAR) are enriched in basic and acidic residues. Over residues 935-976 (SSDASKSNQFKSKDFSSVSTRQPRQSLDLNFQEVNLSSPTLT) the composition is skewed to polar residues. Ser953 and Ser960 each carry phosphoserine. Over residues 1006–1048 (ENKRHSTGHELSTRSNGKHETHRTGSKQRHDLERYRHSKDKDS) the composition is skewed to basic and acidic residues. Glycyl lysine isopeptide (Lys-Gly) (interchain with G-Cter in ubiquitin) cross-links involve residues Lys1008 and Lys1046. Ser1048 bears the Phosphoserine mark. Low complexity predominate over residues 1049–1060 (NSSITISTSTPS). Residues 1071–1082 (QSLDLERVRREA) show a composition bias toward basic and acidic residues. The residue at position 1072 (Ser1072) is a Phosphoserine.

This sequence belongs to the protein kinase superfamily. Ser/Thr protein kinase family.

The enzyme catalyses L-seryl-[protein] + ATP = O-phospho-L-seryl-[protein] + ADP + H(+). The catalysed reaction is L-threonyl-[protein] + ATP = O-phospho-L-threonyl-[protein] + ADP + H(+). Functionally, phosphorylates SCD5. The polypeptide is Serine/threonine-protein kinase AKL1 (AKL1) (Saccharomyces cerevisiae (strain ATCC 204508 / S288c) (Baker's yeast)).